Consider the following 388-residue polypeptide: Probable serine/threonine-protein kinase PBL20 (388 aa).

C3 carries the S-palmitoyl cysteine lipid modification. In terms of domain architecture, Protein kinase spans 91–372 (FSRKLKIGEG…FVVESLTNII (282 aa)). ATP-binding positions include 97–105 (IGEGGFGSV) and K128. Residue D221 is the Proton acceptor of the active site.

The protein belongs to the protein kinase superfamily. Ser/Thr protein kinase family.

The protein localises to the cell membrane. The enzyme catalyses L-seryl-[protein] + ATP = O-phospho-L-seryl-[protein] + ADP + H(+). The catalysed reaction is L-threonyl-[protein] + ATP = O-phospho-L-threonyl-[protein] + ADP + H(+). Functionally, may be involved in plant defense signaling. The protein is Probable serine/threonine-protein kinase PBL20 of Arabidopsis thaliana (Mouse-ear cress).